The sequence spans 334 residues: Glucosyltransferase 3 (334 aa).

UDP contacts are provided by residues Thr-16, Arg-179, and 249-254 (SHKSAT).

Belongs to the Gtf3 glucosyltransferase family. In terms of assembly, homotetramer; a dimer of dimers.

Its pathway is protein modification; protein glycosylation. In terms of biological role, required for polymorphic O-glycosylation of the serine-rich repeat protein in this bacteria. Catalyzes the second step in glycosylation by transferring glucose from UDP-glucose to the terminal GlcNAc moiety of the 3-O-(N-acetyl-alpha-D-glucosaminyl)-L-seryl-[protein] resulting from the first glycosylation step. Its function is as follows. Part of the accessory SecA2/SecY2 system specifically required to export GspB, a serine-rich repeat cell wall protein encoded upstream in the same operon. In Streptococcus gordonii, this protein is Glucosyltransferase 3.